Consider the following 286-residue polypeptide: Pyridoxal kinase PdxY (286 aa).

Residues Ser-9 and 44–45 contribute to the substrate site; that span reads TQ. Residues Asp-111, Ala-143, Glu-148, Lys-181, and 208–211 contribute to the ATP site; that span reads RPLV. Substrate is bound at residue Asp-223.

The protein belongs to the pyridoxine kinase family. PdxY subfamily. In terms of assembly, homodimer. Mg(2+) serves as cofactor.

The enzyme catalyses pyridoxal + ATP = pyridoxal 5'-phosphate + ADP + H(+). The protein operates within cofactor metabolism; pyridoxal 5'-phosphate salvage; pyridoxal 5'-phosphate from pyridoxal: step 1/1. In terms of biological role, pyridoxal kinase involved in the salvage pathway of pyridoxal 5'-phosphate (PLP). Catalyzes the phosphorylation of pyridoxal to PLP. In Yersinia pestis bv. Antiqua (strain Antiqua), this protein is Pyridoxal kinase PdxY.